A 377-amino-acid chain; its full sequence is Succinyl-diaminopimelate desuccinylase (377 aa).

Histidine 68 provides a ligand contact to Zn(2+). Aspartate 70 is a catalytic residue. Aspartate 101 contributes to the Zn(2+) binding site. Glutamate 135 (proton acceptor) is an active-site residue. Residues glutamate 136, glutamate 164, and histidine 350 each coordinate Zn(2+).

It belongs to the peptidase M20A family. DapE subfamily. As to quaternary structure, homodimer. The cofactor is Zn(2+). It depends on Co(2+) as a cofactor.

The catalysed reaction is N-succinyl-(2S,6S)-2,6-diaminopimelate + H2O = (2S,6S)-2,6-diaminopimelate + succinate. It functions in the pathway amino-acid biosynthesis; L-lysine biosynthesis via DAP pathway; LL-2,6-diaminopimelate from (S)-tetrahydrodipicolinate (succinylase route): step 3/3. Catalyzes the hydrolysis of N-succinyl-L,L-diaminopimelic acid (SDAP), forming succinate and LL-2,6-diaminopimelate (DAP), an intermediate involved in the bacterial biosynthesis of lysine and meso-diaminopimelic acid, an essential component of bacterial cell walls. The chain is Succinyl-diaminopimelate desuccinylase from Aliivibrio salmonicida (strain LFI1238) (Vibrio salmonicida (strain LFI1238)).